Here is a 462-residue protein sequence, read N- to C-terminus: Alkaline phosphatase 3 (462 aa).

The signal sequence occupies residues 1-32; that stretch reads MKKFPKKLLPIAVLSSIAFSSLASGSVPEASA. Mg(2+) is bound at residue aspartate 52. Residue aspartate 52 coordinates Zn(2+). Catalysis depends on serine 101, which acts as the Phosphoserine intermediate. The Mg(2+) site is built by threonine 154 and glutamate 275. The Zn(2+) site is built by aspartate 280, histidine 284, aspartate 322, histidine 323, and histidine 419.

The protein belongs to the alkaline phosphatase family. Monomer. The cofactor is Mg(2+). Requires Zn(2+) as cofactor.

The catalysed reaction is a phosphate monoester + H2O = an alcohol + phosphate. This is Alkaline phosphatase 3 (phoB) from Bacillus subtilis (strain 168).